The following is a 152-amino-acid chain: Endoribonuclease YbeY (152 aa).

Zn(2+) contacts are provided by His118, His122, and His128.

This sequence belongs to the endoribonuclease YbeY family. The cofactor is Zn(2+).

The protein localises to the cytoplasm. Its function is as follows. Single strand-specific metallo-endoribonuclease involved in late-stage 70S ribosome quality control and in maturation of the 3' terminus of the 16S rRNA. The polypeptide is Endoribonuclease YbeY (Lacticaseibacillus paracasei (strain ATCC 334 / BCRC 17002 / CCUG 31169 / CIP 107868 / KCTC 3260 / NRRL B-441) (Lactobacillus paracasei)).